Consider the following 257-residue polypeptide: Small ribosomal subunit protein eS1 (257 aa).

The interval 236 to 257 is disordered; sequence TSAEGEKIERPDDYEPPVQESV. Basic and acidic residues predominate over residues 239–248; that stretch reads EGEKIERPDD.

The protein belongs to the eukaryotic ribosomal protein eS1 family. As to quaternary structure, component of the small ribosomal subunit. Mature ribosomes consist of a small (40S) and a large (60S) subunit. The 40S subunit contains about 33 different proteins and 1 molecule of RNA (18S). The 60S subunit contains about 49 different proteins and 3 molecules of RNA (28S, 5.8S and 5S).

Its subcellular location is the cytoplasm. The chain is Small ribosomal subunit protein eS1 from Brugia malayi (Filarial nematode worm).